A 674-amino-acid polypeptide reads, in one-letter code: tRNA wybutosine-synthesizing protein 4 (674 aa).

Residues Arg84, Gly109, Asp140, 184–185, and Glu212 each bind S-adenosyl-L-methionine; that span reads DL.

Belongs to the methyltransferase superfamily. LCMT family.

The catalysed reaction is 7-[(3S)-3-amino-3-carboxypropyl]wyosine(37) in tRNA(Phe) + S-adenosyl-L-methionine = 7-[(3S)-(3-amino-3-methoxycarbonyl)propyl]wyosine(37) in tRNA(Phe) + S-adenosyl-L-homocysteine. The enzyme catalyses 7-[(3S)-(3-amino-3-methoxycarbonyl)propyl]wyosine(37) in tRNA(Phe) + S-adenosyl-L-methionine + CO2 = wybutosine(37) in tRNA(Phe) + S-adenosyl-L-homocysteine + 2 H(+). It participates in tRNA modification; wybutosine-tRNA(Phe) biosynthesis. Functionally, probable S-adenosyl-L-methionine-dependent methyltransferase that acts as a component of the wybutosine biosynthesis pathway. Wybutosine is a hyper modified guanosine with a tricyclic base found at the 3'-position adjacent to the anticodon of eukaryotic phenylalanine tRNA. May methylate the carboxyl group of leucine residues to form alpha-leucine ester residues. In Candida glabrata (strain ATCC 2001 / BCRC 20586 / JCM 3761 / NBRC 0622 / NRRL Y-65 / CBS 138) (Yeast), this protein is tRNA wybutosine-synthesizing protein 4 (PPM2).